The following is a 243-amino-acid chain: Phosphatidylserine decarboxylase proenzyme (243 aa).

The active-site Schiff-base intermediate with substrate; via pyruvic acid is Ser-212. Position 212 is a pyruvic acid (Ser); by autocatalysis (Ser-212).

Belongs to the phosphatidylserine decarboxylase family. PSD-A subfamily. In terms of assembly, heterodimer of a large membrane-associated beta subunit and a small pyruvoyl-containing alpha subunit. Requires pyruvate as cofactor. Post-translationally, is synthesized initially as an inactive proenzyme. Formation of the active enzyme involves a self-maturation process in which the active site pyruvoyl group is generated from an internal serine residue via an autocatalytic post-translational modification. Two non-identical subunits are generated from the proenzyme in this reaction, and the pyruvate is formed at the N-terminus of the alpha chain, which is derived from the carboxyl end of the proenzyme. The post-translation cleavage follows an unusual pathway, termed non-hydrolytic serinolysis, in which the side chain hydroxyl group of the serine supplies its oxygen atom to form the C-terminus of the beta chain, while the remainder of the serine residue undergoes an oxidative deamination to produce ammonia and the pyruvoyl prosthetic group on the alpha chain.

Its subcellular location is the cell membrane. The enzyme catalyses a 1,2-diacyl-sn-glycero-3-phospho-L-serine + H(+) = a 1,2-diacyl-sn-glycero-3-phosphoethanolamine + CO2. It functions in the pathway phospholipid metabolism; phosphatidylethanolamine biosynthesis; phosphatidylethanolamine from CDP-diacylglycerol: step 2/2. In terms of biological role, catalyzes the formation of phosphatidylethanolamine (PtdEtn) from phosphatidylserine (PtdSer). This Mycobacterium leprae (strain Br4923) protein is Phosphatidylserine decarboxylase proenzyme.